A 295-amino-acid polypeptide reads, in one-letter code: Small ribosomal subunit protein uS2 (295 aa).

The interval 263–295 is disordered; the sequence is KKFSKTKNIDEETNTEFEQALNDADENKNSDNA.

Belongs to the universal ribosomal protein uS2 family.

The protein is Small ribosomal subunit protein uS2 of Rickettsia massiliae (strain Mtu5).